We begin with the raw amino-acid sequence, 340 residues long: DNA-directed RNA polymerase subunit alpha (340 aa).

The interval 1–236 is alpha N-terminal domain (alpha-NTD); it reads MLSLSKNWNT…EQLQLFISFE (236 aa). Residues 251–340 are alpha C-terminal domain (alpha-CTD); that stretch reads FSPYLLKRVD…LSKRYEDSYN (90 aa).

It belongs to the RNA polymerase alpha chain family. In terms of assembly, homodimer. The RNAP catalytic core consists of 2 alpha, 1 beta, 1 beta' and 1 omega subunit. When a sigma factor is associated with the core the holoenzyme is formed, which can initiate transcription.

It carries out the reaction RNA(n) + a ribonucleoside 5'-triphosphate = RNA(n+1) + diphosphate. In terms of biological role, DNA-dependent RNA polymerase catalyzes the transcription of DNA into RNA using the four ribonucleoside triphosphates as substrates. In Rickettsia africae (strain ESF-5), this protein is DNA-directed RNA polymerase subunit alpha.